Reading from the N-terminus, the 828-residue chain is Putative alpha-1,3-mannosyltransferase MNN12 (828 aa).

The Cytoplasmic portion of the chain corresponds to 1–13; sequence MIEKLTIKRSRQK. A helical transmembrane segment spans residues 14–34; that stretch reads VIAYSVIIIWLMIVNIWLLNN. The Lumenal portion of the chain corresponds to 35 to 828; that stretch reads YHLNSSTLTR…YYGDVWVGME (794 aa). An N-linked (GlcNAc...) asparagine glycan is attached at N38. Positions 80–104 are disordered; that stretch reads HQEEDVPNSQSTDNSLIKPTSPAKN. The segment covering 86 to 103 has biased composition (polar residues); that stretch reads PNSQSTDNSLIKPTSPAK. Residues N247, N437, and N591 are each glycosylated (N-linked (GlcNAc...) asparagine).

This sequence belongs to the MNN1/MNT family.

It is found in the golgi apparatus membrane. It participates in protein modification; protein glycosylation. Responsible for addition of the terminal mannose residues to the outer chain of core N-linked polysaccharides and to O-linked mannotriose. Implicated in late Golgi modifications. The polypeptide is Putative alpha-1,3-mannosyltransferase MNN12 (MNN12) (Candida albicans (strain SC5314 / ATCC MYA-2876) (Yeast)).